The primary structure comprises 508 residues: Cell death protein 3 (508 aa).

The propeptide occupies Met-1–Asp-223. Residues Met-2 to Leu-91 form the CARD domain. 2 disordered regions span residues Pro-106–His-130 and Tyr-148–Asn-184. Polar residues predominate over residues Leu-118 to Thr-127. Positions Ser-171 to Asn-184 are enriched in low complexity. Catalysis depends on residues His-317 and Cys-360. The segment at Gly-392–Gln-407 is required for interaction with ced-4.

This sequence belongs to the peptidase C14A family. The active form is probably a heterodimer of the p17 subunit with either the p15 or p13 subunit which are all derived from the precursor by autocatalysis. Interacts with octameric ced-4 (two ced-3 zymogens per one ced-4 octamer); the interaction causes the autoproteolytic cleavage and activation of ced-3. Processed ced-3 also interacts with ced-4 octamer to form a stable holoenzyme. Interacts (via large subunit p17) with csp-3; the interaction prevents ced-3 autoactivation and delays ced-4-induced ced-3 processing. Interacts (via large subunit p17 or small subunit p13 or p15) with csp-2; the interaction inhibits ced-3 autoactivation. Interacts (via propeptide) with nucleoporin npp-14; the interaction tethers ced-3 to the nuclear membrane and prevents its autoprocessing in absence of ced-4. Interacts with dct-1. May form a complex composed of ced-3, ced-4 and mac-1. Post-translationally, autocatalytic cleavage removes the propeptide and generates the catalytic subunit p17 and two non-catalytic subunits p15 and p13; autoproteolysis is induced by ced-4 oligomer. Cleaved by caspase csp-1 probably at Asp-146 and Asp-376.

Its subcellular location is the nucleus membrane. It localises to the perikaryon. It is found in the synapse. The protein resides in the mitochondrion. The protein localises to the cytoplasm. Its subcellular location is the perinuclear region. It catalyses the reaction Strict requirement for an Asp residue at position P1 and has a preferred cleavage sequence of Asp-Glu-Val-Asp-|-.. With respect to regulation, octameric ced-4 activates zymogen autoprocessing and enhances activity of processed ced-3. Zymogen autoactivation is inhibited by csp-3. csp-3 has no effect on active ced-3. Zymogen autoactivation is inhibited by csp-2. Inhibited by cysteine protease inhibitor iodoacetic acid (CH3COOI). Inhibited by benzyloxycarbonyl-DEVD-fluoro-methyl ketone (zDEVD-fmk). Inhibited by benzyloxycarbonyl-VAD-fluoro-methyl ketone (zVAD-fmk). Not inhibited by N-[N-(L-3-transcarboxirane-2-carbonyl)-leucyl]-agmatine (E-64) or by the serine and cysteine protease inhibitor L-1-chloro-3-[4-to-osylamido]-7-amino-2-heptanone (TLCK). Functionally, acts as a cysteine protease in controlling programmed cell death (apoptosis) by proteolytically activating or inactivating a wide range of substrates. Component of the egl-1, ced-9, ced-4 and ced-3 apoptotic signaling cascade required for the initiation of programmed cell death in cells fated to die during embryonic and postembryonic development. During oogenesis, required for germline apoptosis downstream of ced-9 and ced-4 but independently of egl-1. By cleaving and activating ced-8, promotes phosphatidylserine exposure on the surface of apoptotic cells; phosphatidylserine is a specific marker only present at the surface of apoptotic cells and acts as a specific signal for engulfment. By cleaving and converting dcr-1 into a deoxyribonuclease (DNase), promotes apoptotic chromosomal DNA fragmentation. By cleaving mitochondrial fission protein drp-1, may regulate the removal of mitochondria during apoptosis. During germline apoptosis, cleaves translation initiation factor ifg-1 (isoform p170) promoting cap-independent translation. During male tail morphogenesis, promotes apoptosis of the tail-spike cell downstream of ced-4 but independently of egl-1 and ced-9. By cleaving cnt-1, prevents the activation of the prosurvival akt-1/2 signaling pathway and thus promotes apoptosis. Downstream of ced-4, may play a role in sex-specific cell apoptosis by cleaving sex-determining protein fem-1. May regulate germline apoptosis in response to DNA damage, probably downstream of let-60/ras and mpk-1 pathway. Cleaves ced-9 in vitro. Cleaves csp-2 isoform b resulting in the removal of the propeptide and the generation of csp-2 subunit p31 in vitro. Independently of its apoptotic role has additional functions. Probably by cleaving and thereby activating actin-severing protein gsnl-1, required for the elimination of transient presynaptic components during larval development downstream of egl-1, ced-9 and ced-4 pathway. Together with ain-1, a component of the miRNA-induced-silencing complex (miRISC), regulates temporal cell fate patterning during larval development. Acts in cell fate patterning by cleaving heterochronic protein lin-28, likely promoting its degradation. Also cleaves heterochronic protein lin-14 and exonuclease disl-2 in vitro. Downstream of calreticulin crt-1 and ced-4 and independently of egl-1 and ced-9, plays a role in the initial steps of axonal regrowth following axotomy. Cleaves 14-3-3-like protein ftt-2, tubulin tbb-2 and calreticulin crt-1 in vitro. Plays also a role in resistance to S.typhimurium-mediated infection. This Caenorhabditis remanei (Caenorhabditis vulgaris) protein is Cell death protein 3.